The following is a 673-amino-acid chain: eEF1A lysine and N-terminal methyltransferase homolog (673 aa).

It belongs to the methyltransferase superfamily.

It catalyses the reaction L-lysyl-[protein] + S-adenosyl-L-methionine = N(6)-methyl-L-lysyl-[protein] + S-adenosyl-L-homocysteine + H(+). The catalysed reaction is N(6)-methyl-L-lysyl-[protein] + S-adenosyl-L-methionine = N(6),N(6)-dimethyl-L-lysyl-[protein] + S-adenosyl-L-homocysteine + H(+). It carries out the reaction N-terminal glycyl-L-lysyl-L-glutamyl-[protein] + 3 S-adenosyl-L-methionine = N-terminal N,N,N-trimethyl-glycyl-L-lysyl-L-glutamyl-[protein] + 3 S-adenosyl-L-homocysteine + 3 H(+). In terms of biological role, dual methyltransferase. It catalyzes N-terminal methylation of target proteins via its C-terminus. It catalyzes dimethylation on lysine residues of target proteins via its N-terminus. This is eEF1A lysine and N-terminal methyltransferase homolog from Drosophila pseudoobscura pseudoobscura (Fruit fly).